The primary structure comprises 668 residues: Patellin-5 (668 aa).

Residues 1-263 are disordered; it reads MSQDSATTTP…STTTSTVASR (263 aa). Composition is skewed to basic and acidic residues over residues 55 to 68, 82 to 100, 107 to 125, and 132 to 150; these read ESNH…EKVT, AAED…ETAK, TAED…ETVK, and VAED…ETVK. Polar residues predominate over residues 170–186; sequence TPETETSEADTSLLVTS. A compositionally biased stretch (acidic residues) spans 218-231; sequence VEDWTEPELPDEAV. Over residues 244-254 the composition is skewed to pro residues; that stretch reads PEPQTPPPPPS. S290 bears the Phosphoserine mark. A CRAL-TRIO domain is found at 377–552; sequence DENLGDDLDK…QYGGLSVDNC (176 aa). The GOLD domain occupies 556–662; that stretch reads SDFTHDDIAT…KKMLIYRFKV (107 aa).

This sequence belongs to the patellin family.

Its subcellular location is the membrane. It localises to the cytoplasm. In terms of biological role, carrier protein that may be involved in membrane-trafficking events associated with cell plate formation during cytokinesis. Binds to some hydrophobic molecules such as phosphoinositides and promotes their transfer between the different cellular sites. This chain is Patellin-5 (PATL5), found in Arabidopsis thaliana (Mouse-ear cress).